A 616-amino-acid chain; its full sequence is Dihydroxy-acid dehydratase (616 aa).

Aspartate 81 provides a ligand contact to Mg(2+). Cysteine 122 is a binding site for [2Fe-2S] cluster. Aspartate 123 and lysine 124 together coordinate Mg(2+). Position 124 is an N6-carboxylysine (lysine 124). Cysteine 195 lines the [2Fe-2S] cluster pocket. Glutamate 491 contributes to the Mg(2+) binding site. Serine 517 acts as the Proton acceptor in catalysis.

Belongs to the IlvD/Edd family. As to quaternary structure, homodimer. It depends on [2Fe-2S] cluster as a cofactor. Mg(2+) is required as a cofactor.

It carries out the reaction (2R)-2,3-dihydroxy-3-methylbutanoate = 3-methyl-2-oxobutanoate + H2O. The catalysed reaction is (2R,3R)-2,3-dihydroxy-3-methylpentanoate = (S)-3-methyl-2-oxopentanoate + H2O. The protein operates within amino-acid biosynthesis; L-isoleucine biosynthesis; L-isoleucine from 2-oxobutanoate: step 3/4. Its pathway is amino-acid biosynthesis; L-valine biosynthesis; L-valine from pyruvate: step 3/4. Functions in the biosynthesis of branched-chain amino acids. Catalyzes the dehydration of (2R,3R)-2,3-dihydroxy-3-methylpentanoate (2,3-dihydroxy-3-methylvalerate) into 2-oxo-3-methylpentanoate (2-oxo-3-methylvalerate) and of (2R)-2,3-dihydroxy-3-methylbutanoate (2,3-dihydroxyisovalerate) into 2-oxo-3-methylbutanoate (2-oxoisovalerate), the penultimate precursor to L-isoleucine and L-valine, respectively. The chain is Dihydroxy-acid dehydratase from Escherichia coli O127:H6 (strain E2348/69 / EPEC).